An 84-amino-acid chain; its full sequence is Large ribosomal subunit protein bL27 (84 aa).

Residues methionine 1–leucine 21 form a disordered region.

It belongs to the bacterial ribosomal protein bL27 family.

The sequence is that of Large ribosomal subunit protein bL27 from Brachyspira hyodysenteriae (strain ATCC 49526 / WA1).